A 532-amino-acid polypeptide reads, in one-letter code: CTP synthase (532 aa).

An amidoligase domain region spans residues 1–267 (MAKFIFVTGG…QDIIIEQLQL (267 aa)). A CTP-binding site is contributed by Ser13. Position 13 (Ser13) interacts with UTP. Residue 14-19 (GLGKGI) coordinates ATP. Tyr54 is an L-glutamine binding site. Residue Asp71 coordinates ATP. Asp71 and Glu141 together coordinate Mg(2+). CTP is bound by residues 148–150 (DIE), 188–193 (KTKPIQ), and Lys224. Residues 188–193 (KTKPIQ) and Lys224 each bind UTP. A Glutamine amidotransferase type-1 domain is found at 292-532 (EISFVGKYIE…FIKAIVENNK (241 aa)). L-glutamine is bound at residue Gly354. The Nucleophile; for glutamine hydrolysis role is filled by Cys381. L-glutamine is bound by residues 382-385 (LGMQ), Glu405, and Arg461. Active-site residues include His506 and Glu508.

This sequence belongs to the CTP synthase family. In terms of assembly, homotetramer.

It catalyses the reaction UTP + L-glutamine + ATP + H2O = CTP + L-glutamate + ADP + phosphate + 2 H(+). The enzyme catalyses L-glutamine + H2O = L-glutamate + NH4(+). The catalysed reaction is UTP + NH4(+) + ATP = CTP + ADP + phosphate + 2 H(+). It functions in the pathway pyrimidine metabolism; CTP biosynthesis via de novo pathway; CTP from UDP: step 2/2. Allosterically activated by GTP, when glutamine is the substrate; GTP has no effect on the reaction when ammonia is the substrate. The allosteric effector GTP functions by stabilizing the protein conformation that binds the tetrahedral intermediate(s) formed during glutamine hydrolysis. Inhibited by the product CTP, via allosteric rather than competitive inhibition. Catalyzes the ATP-dependent amination of UTP to CTP with either L-glutamine or ammonia as the source of nitrogen. Regulates intracellular CTP levels through interactions with the four ribonucleotide triphosphates. In Mycoplasma mycoides subsp. mycoides SC (strain CCUG 32753 / NCTC 10114 / PG1), this protein is CTP synthase.